Consider the following 355-residue polypeptide: 3-dehydroquinate synthase (355 aa).

NAD(+) is bound by residues 71–76 (EGEERK), 105–109 (GVVGD), 129–130 (TS), Lys142, and Lys151. Glu184, His246, and His263 together coordinate Zn(2+).

This sequence belongs to the sugar phosphate cyclases superfamily. Dehydroquinate synthase family. It depends on Co(2+) as a cofactor. Zn(2+) serves as cofactor. Requires NAD(+) as cofactor.

It localises to the cytoplasm. The catalysed reaction is 7-phospho-2-dehydro-3-deoxy-D-arabino-heptonate = 3-dehydroquinate + phosphate. It participates in metabolic intermediate biosynthesis; chorismate biosynthesis; chorismate from D-erythrose 4-phosphate and phosphoenolpyruvate: step 2/7. Its function is as follows. Catalyzes the conversion of 3-deoxy-D-arabino-heptulosonate 7-phosphate (DAHP) to dehydroquinate (DHQ). The sequence is that of 3-dehydroquinate synthase from Streptococcus pneumoniae serotype 19F (strain G54).